The sequence spans 117 residues: Large ribosomal subunit protein bL20 (117 aa).

It belongs to the bacterial ribosomal protein bL20 family.

Functionally, binds directly to 23S ribosomal RNA and is necessary for the in vitro assembly process of the 50S ribosomal subunit. It is not involved in the protein synthesizing functions of that subunit. This chain is Large ribosomal subunit protein bL20, found in Citrifermentans bemidjiense (strain ATCC BAA-1014 / DSM 16622 / JCM 12645 / Bem) (Geobacter bemidjiensis).